The sequence spans 126 residues: Large-conductance mechanosensitive channel (126 aa).

2 helical membrane passes run 17–37 (VDLA…SSFI) and 70–90 (GLFL…FLII).

Belongs to the MscL family. In terms of assembly, homopentamer.

It localises to the cell inner membrane. Channel that opens in response to stretch forces in the membrane lipid bilayer. May participate in the regulation of osmotic pressure changes within the cell. In Flavobacterium johnsoniae (strain ATCC 17061 / DSM 2064 / JCM 8514 / BCRC 14874 / CCUG 350202 / NBRC 14942 / NCIMB 11054 / UW101) (Cytophaga johnsonae), this protein is Large-conductance mechanosensitive channel.